We begin with the raw amino-acid sequence, 550 residues long: Glucose-6-phosphate isomerase (550 aa).

The active-site Proton donor is Glu-357. Residues His-389 and Lys-509 contribute to the active site.

The protein belongs to the GPI family.

The protein localises to the cytoplasm. It carries out the reaction alpha-D-glucose 6-phosphate = beta-D-fructose 6-phosphate. It participates in carbohydrate biosynthesis; gluconeogenesis. It functions in the pathway carbohydrate degradation; glycolysis; D-glyceraldehyde 3-phosphate and glycerone phosphate from D-glucose: step 2/4. Its function is as follows. Catalyzes the reversible isomerization of glucose-6-phosphate to fructose-6-phosphate. This Anaeromyxobacter dehalogenans (strain 2CP-C) protein is Glucose-6-phosphate isomerase.